The sequence spans 228 residues: uncharacterized protein (228 aa).

The 222-residue stretch at 7–228 folds into the ABC transporter domain; the sequence is VEVHHLKKSV…LVNGQLQEEA (222 aa). 43 to 50 contacts ATP; that stretch reads GESGSGKS.

The protein belongs to the ABC transporter superfamily.

This is an uncharacterized protein from Escherichia coli O157:H7.